We begin with the raw amino-acid sequence, 223 residues long: Small ribosomal subunit protein uS3 (223 aa).

One can recognise a KH type-2 domain in the interval 39-107 (VREFLHKKLA…PVQINIEEVR (69 aa)).

This sequence belongs to the universal ribosomal protein uS3 family. Part of the 30S ribosomal subunit. Forms a tight complex with proteins S10 and S14.

Functionally, binds the lower part of the 30S subunit head. Binds mRNA in the 70S ribosome, positioning it for translation. This is Small ribosomal subunit protein uS3 from Francisella tularensis subsp. mediasiatica (strain FSC147).